Here is a 281-residue protein sequence, read N- to C-terminus: Protein EMBRYO DEFECTIVE 1674 (281 aa).

Polar residues-rich tracts occupy residues 1–14 (MTTT…QSLS) and 24–41 (PNTS…PNSS). The tract at residues 1–47 (MTTTRAKSKFQSLSACRFTPLPEPNTSPSTYSKTLPKPNSSPGTDGT) is disordered. Residues 66-153 (VTLSDWWLTK…LGFPYDWEDY (88 aa)) form the SANTA domain.

Its function is as follows. Required for normal embryo development. This is Protein EMBRYO DEFECTIVE 1674 from Arabidopsis thaliana (Mouse-ear cress).